The sequence spans 654 residues: Potassium voltage-gated channel subfamily A member 4 (654 aa).

Residues Met-1 to Ser-305 lie on the Cytoplasmic side of the membrane. The segment covering Ala-39 to Glu-52 has biased composition (low complexity). The tract at residues Ala-39 to Asp-146 is disordered. Basic residues predominate over residues Gly-81–Gln-99. Ser-122 is subject to Phosphoserine. Residues Ser-122–Glu-137 are compositionally biased toward acidic residues. A helical transmembrane segment spans residues Pro-306 to Leu-327. The Extracellular segment spans residues Glu-328 to Pro-371. Asn-353 carries an N-linked (GlcNAc...) asparagine glycan. The helical transmembrane segment at Phe-372 to Ala-393 threads the bilayer. Residues Cys-394–Ile-404 lie on the Cytoplasmic side of the membrane. Residues Met-405 to Ala-425 traverse the membrane as a helical segment. The Extracellular portion of the chain corresponds to Gln-426–Ser-440. A helical; Voltage-sensor transmembrane segment spans residues Phe-441–His-461. Topologically, residues Ser-462–Met-476 are cytoplasmic. The segment at Lys-463–Met-476 is S4-S5 linker. Residues Arg-477–Tyr-498 form a helical membrane-spanning segment. Residues Phe-499–Ile-512 are Extracellular-facing. Residues Pro-513–Thr-524 constitute an intramembrane region (helical). A Selectivity filter motif is present at residues Thr-525 to Asp-530. Residues Thr-525–Lys-532 lie within the membrane without spanning it. The Extracellular portion of the chain corresponds to Pro-533–Lys-539. The chain crosses the membrane as a helical span at residues Ile-540–Tyr-568. The Cytoplasmic portion of the chain corresponds to His-569–Val-654. Ser-600 is modified (phosphoserine; by PKA). A compositionally biased stretch (basic and acidic residues) spans Cys-630–Lys-641. The tract at residues Cys-630–Val-654 is disordered. The PDZ-binding signature appears at Thr-652 to Val-654.

This sequence belongs to the potassium channel family. A (Shaker) (TC 1.A.1.2) subfamily. Kv1.4/KCNA4 sub-subfamily. In terms of assembly, homotetramer and heterotetramer of potassium channel proteins. Interacts with KCNAB1 and KCNAB2. Interacts with DLG1, DLG2 and DLG4 via their PDZ domains. Interacts with SIGMAR1. Detected in a complex with KCNA1. Interacts with KCNA2. Part of a complex containing KCNA1, KCNAB1 and LGI1. Interacts (via cytoplasmic N-terminal domain) with KCNRG. Detectable in brain, atrium, left and right ventricle, and kidney, but not in skeletal muscle, endothelial cells, aorta, and liver.

The protein resides in the cell membrane. Its subcellular location is the cell projection. The protein localises to the axon. The enzyme catalyses K(+)(in) = K(+)(out). Its function is as follows. Voltage-gated potassium channel that mediates transmembrane potassium transport in excitable membranes. Forms tetrameric potassium-selective channels through which potassium ions pass in accordance with their electrochemical gradient. The channel alternates between opened and closed conformations in response to the voltage difference across the membrane. Can form functional homotetrameric channels and heterotetrameric channels that contain variable proportions of KCNA1, KCNA2, KCNA4, KCNA5, and possibly other family members as well; channel properties depend on the type of alpha subunits that are part of the channel. Channel properties are modulated by cytoplasmic beta subunits that regulate the subcellular location of the alpha subunits and promote rapid inactivation. In vivo, membranes probably contain a mixture of heteromeric potassium channel complexes, making it difficult to assign currents observed in intact tissues to any particular potassium channel family member. Homotetrameric KCNA4 forms a potassium channel that opens in response to membrane depolarization, followed by rapid spontaneous channel closure. Likewise, a heterotetrameric channel formed by KCNA1 and KCNA4 shows rapid inactivation. The protein is Potassium voltage-gated channel subfamily A member 4 (KCNA4) of Mustela putorius furo (European domestic ferret).